Reading from the N-terminus, the 349-residue chain is S-adenosylmethionine:tRNA ribosyltransferase-isomerase (349 aa).

This sequence belongs to the QueA family. In terms of assembly, monomer.

It is found in the cytoplasm. The catalysed reaction is 7-aminomethyl-7-carbaguanosine(34) in tRNA + S-adenosyl-L-methionine = epoxyqueuosine(34) in tRNA + adenine + L-methionine + 2 H(+). It participates in tRNA modification; tRNA-queuosine biosynthesis. In terms of biological role, transfers and isomerizes the ribose moiety from AdoMet to the 7-aminomethyl group of 7-deazaguanine (preQ1-tRNA) to give epoxyqueuosine (oQ-tRNA). This is S-adenosylmethionine:tRNA ribosyltransferase-isomerase from Cupriavidus pinatubonensis (strain JMP 134 / LMG 1197) (Cupriavidus necator (strain JMP 134)).